The following is a 477-amino-acid chain: Bifunctional protein HldE (477 aa).

The segment at 1-318 (MKVTLPEFER…ENAVRGRAET (318 aa)) is ribokinase. K179 bears the N6-acetyllysine mark. Residue 195 to 198 (NLSE) participates in ATP binding. D264 is an active-site residue. The interval 344 to 477 (MTNGVFDILH…IKKIQQDKKG (134 aa)) is cytidylyltransferase.

In the N-terminal section; belongs to the carbohydrate kinase PfkB family. This sequence in the C-terminal section; belongs to the cytidylyltransferase family. As to quaternary structure, homodimer.

The enzyme catalyses D-glycero-beta-D-manno-heptose 7-phosphate + ATP = D-glycero-beta-D-manno-heptose 1,7-bisphosphate + ADP + H(+). It catalyses the reaction D-glycero-beta-D-manno-heptose 1-phosphate + ATP + H(+) = ADP-D-glycero-beta-D-manno-heptose + diphosphate. Its pathway is nucleotide-sugar biosynthesis; ADP-L-glycero-beta-D-manno-heptose biosynthesis; ADP-L-glycero-beta-D-manno-heptose from D-glycero-beta-D-manno-heptose 7-phosphate: step 1/4. The protein operates within nucleotide-sugar biosynthesis; ADP-L-glycero-beta-D-manno-heptose biosynthesis; ADP-L-glycero-beta-D-manno-heptose from D-glycero-beta-D-manno-heptose 7-phosphate: step 3/4. Its function is as follows. Catalyzes the phosphorylation of D-glycero-D-manno-heptose 7-phosphate at the C-1 position to selectively form D-glycero-beta-D-manno-heptose-1,7-bisphosphate. Catalyzes the ADP transfer from ATP to D-glycero-beta-D-manno-heptose 1-phosphate, yielding ADP-D-glycero-beta-D-manno-heptose. This Shigella dysenteriae serotype 1 (strain Sd197) protein is Bifunctional protein HldE.